A 216-amino-acid polypeptide reads, in one-letter code: 2,5-diamino-6-ribosylamino-4(3H)-pyrimidinone 5'-phosphate reductase (216 aa).

Residues Thr51, Asp55, 79–82 (SMAR), Val126, and 148–151 (GSTL) each bind NADP(+).

The protein belongs to the HTP reductase family. As to quaternary structure, homodimer.

It catalyses the reaction 2,5-diamino-6-(1-D-ribitylamino)pyrimidin-4(3H)-one 5'-phosphate + NADP(+) = 2,5-diamino-6-(1-D-ribosylamino)pyrimidin-4(3H)-one 5'-phosphate + NADPH + H(+). The catalysed reaction is 2,5-diamino-6-(1-D-ribitylamino)pyrimidin-4(3H)-one 5'-phosphate + NAD(+) = 2,5-diamino-6-(1-D-ribosylamino)pyrimidin-4(3H)-one 5'-phosphate + NADH + H(+). It functions in the pathway cofactor biosynthesis; riboflavin biosynthesis. Functionally, catalyzes an early step in riboflavin biosynthesis, the NADPH-dependent reduction of the ribose side chain of 2,5-diamino-6-ribosylamino-4(3H)-pyrimidinone 5'-phosphate, yielding 2,5-diamino-6-ribitylamino-4(3H)-pyrimidinone 5'-phosphate. The polypeptide is 2,5-diamino-6-ribosylamino-4(3H)-pyrimidinone 5'-phosphate reductase (Methanothermobacter thermautotrophicus (strain ATCC 29096 / DSM 1053 / JCM 10044 / NBRC 100330 / Delta H) (Methanobacterium thermoautotrophicum)).